The primary structure comprises 52 residues: uncharacterized protein (52 aa).

This is an uncharacterized protein from Bacillus subtilis (strain 168).